Consider the following 333-residue polypeptide: Beta-ketoacyl-[acyl-carrier-protein] synthase III (333 aa).

Catalysis depends on residues Cys-117 and His-257. The ACP-binding stretch occupies residues 258–262; sequence QANLR. Residue Asn-287 is part of the active site.

Belongs to the thiolase-like superfamily. FabH family. Homodimer.

The protein resides in the cytoplasm. The catalysed reaction is malonyl-[ACP] + acetyl-CoA + H(+) = 3-oxobutanoyl-[ACP] + CO2 + CoA. It functions in the pathway lipid metabolism; fatty acid biosynthesis. Catalyzes the condensation reaction of fatty acid synthesis by the addition to an acyl acceptor of two carbons from malonyl-ACP. Catalyzes the first condensation reaction which initiates fatty acid synthesis and may therefore play a role in governing the total rate of fatty acid production. Possesses both acetoacetyl-ACP synthase and acetyl transacylase activities. Its substrate specificity determines the biosynthesis of branched-chain and/or straight-chain of fatty acids. The sequence is that of Beta-ketoacyl-[acyl-carrier-protein] synthase III from Azobacteroides pseudotrichonymphae genomovar. CFP2.